A 335-amino-acid chain; its full sequence is Vitamin B12 import system permease protein BtuC (335 aa).

The next 9 helical transmembrane spans lie at 21–43 (FLAI…GENW), 63–82 (FPRV…AGAV), 95–114 (GLLG…VLMF), 119–141 (PFWL…LLTF), 153–175 (LLVG…YFST), 195–212 (WRHQ…IWLS), 244–266 (FAVG…IGLV), 281–303 (TLLP…LSRL), and 310–329 (VPIG…WLLL).

This sequence belongs to the binding-protein-dependent transport system permease family. FecCD subfamily. As to quaternary structure, the complex is composed of two ATP-binding proteins (BtuD), two transmembrane proteins (BtuC) and a solute-binding protein (BtuF).

It localises to the cell inner membrane. Functionally, part of the ABC transporter complex BtuCDF involved in vitamin B12 import. Involved in the translocation of the substrate across the membrane. The sequence is that of Vitamin B12 import system permease protein BtuC from Photorhabdus laumondii subsp. laumondii (strain DSM 15139 / CIP 105565 / TT01) (Photorhabdus luminescens subsp. laumondii).